The following is an 81-amino-acid chain: Trefoil factor 1 (81 aa).

The signal sequence occupies residues 1–23; it reads MEHRVIYVLVLVCALTLSSLAQG. One can recognise a P-type domain in the interval 26–69; that stretch reads ETCTVAPHHRDNCGSPGITPSQCKDKGCCFDNTVRGVPWCYYPV. 3 disulfides stabilise this stretch: Cys-28/Cys-54, Cys-38/Cys-53, and Cys-48/Cys-65.

The protein resides in the secreted. Stabilizer of the mucous gel overlying the gastrointestinal mucosa that provides a physical barrier against various noxious agents. The sequence is that of Trefoil factor 1 (TFF1) from Canis lupus familiaris (Dog).